The primary structure comprises 366 residues: tRNA(Met) cytidine acetate ligase (366 aa).

ATP contacts are provided by residues 7–20 (IAEFNPFHNGHQYL), Gly101, Asn145, and Arg170.

This sequence belongs to the TmcAL family.

It localises to the cytoplasm. The catalysed reaction is cytidine(34) in elongator tRNA(Met) + acetate + ATP = N(4)-acetylcytidine(34) in elongator tRNA(Met) + AMP + diphosphate. In terms of biological role, catalyzes the formation of N(4)-acetylcytidine (ac(4)C) at the wobble position of elongator tRNA(Met), using acetate and ATP as substrates. First activates an acetate ion to form acetyladenylate (Ac-AMP) and then transfers the acetyl group to tRNA to form ac(4)C34. The chain is tRNA(Met) cytidine acetate ligase from Pediococcus pentosaceus (strain ATCC 25745 / CCUG 21536 / LMG 10740 / 183-1w).